The following is a 259-amino-acid chain: Ubiquinol-cytochrome c reductase complex assembly factor 1 (259 aa).

Belongs to the CBP3 family. Interacts with sloth1; the interaction is probably involved in the assembly and stability of the mitochondrial ubiquinol-cytochrome c reductase complex.

It localises to the mitochondrion inner membrane. In terms of biological role, required for the assembly of the ubiquinol-cytochrome c reductase complex (mitochondrial respiratory chain complex III or cytochrome b-c1 complex). May be involved in cytochrome b translation and/or stability. This chain is Ubiquinol-cytochrome c reductase complex assembly factor 1, found in Drosophila melanogaster (Fruit fly).